The chain runs to 293 residues: Phosphatidylcholine-sterol acyltransferase (293 aa).

N-linked (GlcNAc...) asparagine glycosylation is present at N26. The Nucleophile role is filled by S123. N179 is a glycosylation site (N-linked (GlcNAc...) asparagine). An intrachain disulfide couples C220 to C263. D252 functions as the Charge relay system in the catalytic mechanism. N-linked (GlcNAc...) asparagine glycosylation is present at N280. H284 serves as the catalytic Charge relay system.

The protein belongs to the AB hydrolase superfamily. Lipase family.

It localises to the secreted. The enzyme catalyses a sterol + a 1,2-diacyl-sn-glycero-3-phosphocholine = a sterol ester + a 1-acyl-sn-glycero-3-phosphocholine. Its activity is regulated as follows. APOA1 is the most potent activator in plasma. Also activated by APOE, APOC1 and APOA4. Central enzyme in the extracellular metabolism of plasma lipoproteins. Synthesized mainly in the liver and secreted into plasma where it converts cholesterol and phosphatidylcholines (lecithins) to cholesteryl esters and lysophosphatidylcholines on the surface of high and low density lipoproteins (HDLs and LDLs). The cholesterol ester is then transported back to the liver. Has a preference for plasma 16:0-18:2 or 18:O-18:2 phosphatidylcholines. Also produced in the brain by primary astrocytes, and esterifies free cholesterol on nascent APOE-containing lipoproteins secreted from glia and influences cerebral spinal fluid (CSF) APOE- and APOA1 levels. Together with APOE and the cholesterol transporter ABCA1, plays a key role in the maturation of glial-derived, nascent lipoproteins. Required for remodeling high-density lipoprotein particles into their spherical forms. This chain is Phosphatidylcholine-sterol acyltransferase (LCAT), found in Gerbilliscus gambianus (Gambian gerbil).